The primary structure comprises 64 residues: uncharacterized protein (64 aa).

This is an uncharacterized protein from Escherichia coli O157:H7.